The primary structure comprises 369 residues: MSQASALRAPTPQALPPMAREQALRPDVNEAHVRFIGLGKTYPGQAQPALQGIDLNIRHGEIFGIIGRSGAGKSSLLRTINRLEQPSQGRVLIDQVDIAPFNEDQLVALRRRIGMIFQHFNLMSAKTVWQNVELPLKVAGVAKAERQRKVRELLELVGLQEKHHVYPAQLSGGQKQRVGIARALVHTPEILLCDEATSALDPETTASILELLRDINQRLGLTIVLITHEMAVIRDICHRVVVLERGAVVEQGEVWRVFGSPRHEVTRTLLAPLQAKLPAALQASLQAHPASGNSAVVLKLTVLGEPELSALFNDLGGRVRLLQGGVETIGEHALGQLILSVQHSPHDTHQLLERARRWAEDVEVLGHVD.

Residues 33–270 enclose the ABC transporter domain; the sequence is VRFIGLGKTY…PRHEVTRTLL (238 aa). Residue 67–74 coordinates ATP; the sequence is GRSGAGKS.

It belongs to the ABC transporter superfamily. Methionine importer (TC 3.A.1.24) family. As to quaternary structure, the complex is composed of two ATP-binding proteins (MetN), two transmembrane proteins (MetI) and a solute-binding protein (MetQ).

It is found in the cell inner membrane. It catalyses the reaction L-methionine(out) + ATP + H2O = L-methionine(in) + ADP + phosphate + H(+). The enzyme catalyses D-methionine(out) + ATP + H2O = D-methionine(in) + ADP + phosphate + H(+). In terms of biological role, part of the ABC transporter complex MetNIQ involved in methionine import. Responsible for energy coupling to the transport system. The polypeptide is Methionine import ATP-binding protein MetN 2 (Pseudomonas putida (strain ATCC 47054 / DSM 6125 / CFBP 8728 / NCIMB 11950 / KT2440)).